Reading from the N-terminus, the 146-residue chain is Cytidine deaminase (146 aa).

Positions 13–140 (ECVQQLLVCS…ELLPSSFGPE (128 aa)) constitute a CMP/dCMP-type deaminase domain. Residue 54-60 (NIENACY) participates in substrate binding. Cys-65 serves as a coordination point for Zn(2+). Glu-67 (proton donor) is an active-site residue. Positions 99 and 102 each coordinate Zn(2+).

The protein belongs to the cytidine and deoxycytidylate deaminase family. As to quaternary structure, homotetramer. Zn(2+) is required as a cofactor. As to expression, highly expressed in granulocytes while expression is very low in fibroblasts, chondrocytes, monocytes, and T- as well as B-cell lines.

The catalysed reaction is cytidine + H2O + H(+) = uridine + NH4(+). The enzyme catalyses 2'-deoxycytidine + H2O + H(+) = 2'-deoxyuridine + NH4(+). In terms of biological role, this enzyme scavenges exogenous and endogenous cytidine and 2'-deoxycytidine for UMP synthesis. The sequence is that of Cytidine deaminase from Homo sapiens (Human).